The primary structure comprises 139 residues: ATP synthase epsilon chain (139 aa).

It belongs to the ATPase epsilon chain family. In terms of assembly, F-type ATPases have 2 components, CF(1) - the catalytic core - and CF(0) - the membrane proton channel. CF(1) has five subunits: alpha(3), beta(3), gamma(1), delta(1), epsilon(1). CF(0) has three main subunits: a, b and c.

It localises to the cell inner membrane. Produces ATP from ADP in the presence of a proton gradient across the membrane. In Actinobacillus pleuropneumoniae serotype 7 (strain AP76), this protein is ATP synthase epsilon chain.